The primary structure comprises 337 residues: Nucleotide sugar transporter SLC35D2 (337 aa).

Topologically, residues Met-1 to Arg-27 are cytoplasmic. The helical transmembrane segment at Leu-28–Leu-48 threads the bilayer. Over Leu-49 to Gly-53 the chain is Extracellular. A helical membrane pass occupies residues Phe-54–Val-74. At Ser-75–Asn-146 the chain is on the cytoplasmic side. A run of 2 helical transmembrane segments spans residues Ile-147–Ala-167 and Phe-168–Val-188. At Tyr-189–Lys-201 the chain is on the cytoplasmic side. A helical membrane pass occupies residues Tyr-202–Ser-222. At Thr-223 to Asn-237 the chain is on the extracellular side. A helical membrane pass occupies residues Val-238–Thr-258. At Val-259–Asn-265 the chain is on the cytoplasmic side. Residues Ser-266–Ile-288 traverse the membrane as a helical segment. Residues Gly-289–Tyr-292 are Extracellular-facing. A helical transmembrane segment spans residues Ile-293 to Leu-315. The Cytoplasmic segment spans residues Thr-316–Ser-337.

Belongs to the TPT transporter family. SLC35D subfamily. As to expression, highly expressed in heart, kidney, small intestine, placenta, lung and peripheral blood leukocyte. Weakly expressed in skeletal muscle and spleen. Not expressed in brain, colon and thymus.

It is found in the golgi apparatus membrane. It catalyses the reaction UMP(out) + UDP-N-acetyl-alpha-D-glucosamine(in) = UMP(in) + UDP-N-acetyl-alpha-D-glucosamine(out). It carries out the reaction UMP(out) + UDP-alpha-D-glucose(in) = UMP(in) + UDP-alpha-D-glucose(out). Functionally, nucleotide sugar antiporter transporting UDP-N-acetylglucosamine (UDP-GlcNAc) and UDP-glucose (UDP-Glc) from the cytosol into the lumen of the Golgi in exchange of UMP. By supplying UDP-N-acetylglucosamine, a donor substrate to heparan sulfate synthases, probably takes part in the synthesis of these glycoconjugates. The chain is Nucleotide sugar transporter SLC35D2 from Homo sapiens (Human).